The sequence spans 138 residues: MTEGRIQSYRKKIYVIRQKLKAKKPKFLRYDSDKFYRLGRQEKWRRPYGRDNKTRLKVRGFPAIVSVGYRLPKKVRGFHPSGLRQVIVHNVNELVKVQNQKDNVIVTISSSVGFKKRLEILNKARELGLKVSNEGVVT.

The protein belongs to the eukaryotic ribosomal protein eL32 family.

The protein is Large ribosomal subunit protein eL32 (rpl32e) of Saccharolobus solfataricus (strain ATCC 35092 / DSM 1617 / JCM 11322 / P2) (Sulfolobus solfataricus).